Reading from the N-terminus, the 1960-residue chain is Intraflagellar transport protein 172 (1960 aa).

WD repeat units lie at residues 63–103 and 328–367; these read SNKD…TDKK and GFLP…YRYC. TPR repeat units lie at residues 1064–1098, 1362–1395, and 1397–1428; these read KADQ…QSYR, CDLF…QEIV, and MYLD…RSIR.

This sequence belongs to the IFT172 family.

It localises to the cell projection. Its subcellular location is the cilium. The protein localises to the flagellum. The protein resides in the cytoplasm. It is found in the cytoskeleton. It localises to the flagellum axoneme. Its subcellular location is the flagellum basal body. Component of the intraflagellar transport complex B (IFT-B) involved in flagellar assembly. In Giardia intestinalis (strain ATCC 50803 / WB clone C6) (Giardia lamblia), this protein is Intraflagellar transport protein 172.